We begin with the raw amino-acid sequence, 438 residues long: Leupeptin-inactivating enzyme 1 (438 aa).

Positions 1-37 (MSLSVSRRLAAVTAFAVAGLFASAVPAALAAPSAVAA) are cleaved as a signal peptide. The Zn(2+) site is built by His-125 and Asp-137. The active-site Proton acceptor is the Glu-171. Residues Glu-172, Asp-200, and His-287 each coordinate Zn(2+). Cys-285 and Cys-290 form a disulfide bridge. Residues 321–438 (VPPGQSFENT…GYINSWKITF (118 aa)) form the P/Homo B domain.

Belongs to the peptidase M28 family. M28A subfamily. Monomer. It depends on Zn(2+) as a cofactor.

It localises to the secreted. Its activity is regulated as follows. Activity is inhibited by metalloprotease inhibitors and activated by Mg(2+) and Ca(2+). In terms of biological role, a leucine-specific metalloprotease that plays a role in controlling the amount of leupeptin during colony development. Degrades leupeptin into three components, acetyl-leucine, leucine and argininal. Has a strict preference for leucine at the P1 site. This is Leupeptin-inactivating enzyme 1 (lieA) from Streptomyces exfoliatus (Streptomyces hydrogenans).